Consider the following 1905-residue polypeptide: MAAAQGLLFWLLLLGPPCRVPGQPEQDPGRRFSQFKLCADEECCMLMYRGEALEDFTGPDCRFVNFKKGDTVYVYYKLAGGSPEVWAGSVGHTFGYFPKDLIQVVHEYTQEELQVPTDETDFVCFDGGRDDFDNYNVEDLLGFLELYDSATEDSEKVKEKTAQRVEEPPEASNESDAEPEPGEPNSEESESVLSENTAELRERSEAQKSHPQVNSQTGHAQGERTSFESFGEMLQDKLKVPDSENNKTSNSSQVSHEQEKIDAYKLLKTEMTLDLKTKFGSTADALVSDDETTRLVTSLEDDFVEDLDPEYYTVGKEEEENKEDFDELPLLTFTDGEDTKSPGHSGIEKHPTEKEQNSNKEHKVEETQPPGIKKGDKEIPKHREDTVFSDVMEGEENTDTDLESSDSKEEDDPLVMDSRLGKPRPEDHTDPEKAADHLVNVEVPKADSDDDPEVGAGLHMKDKGRKVEEPRRDWVQHEVGLEDETQEDQAVQGSSQSGHLRSSPAAEKSTETLKSAFANQENDLKGAAVHISKEMLHEEKPSGRSLEGASKSDSVPQAKAAGNQGEEGKTEREPVGVAAPSGDHQPNASKDSVDEVDGSISGPKPHVLSGEHPSAELIKDRLLKLQNQTRFSSPDDMGLPGDLEKKRPILERKLSWQQGGVAAAVNKQVSEKRELPEEEVTRVTKDASDEGQEVRKTGQTDSIEGRGFRPKEPNPEDEDYSPEELLEDENAVSAKQSKERSPEIQDKRLDVDLQNPEKPVSGAIKTDPETEKNKEETRHVSENERKNETAGKAVDSLGRDAGGPVVEKEGSSPVHQKVQRPSEGSDVPGKKQNQTPELGEASQKKDPDYLKEDNHEGHPKTSGLMEKPGVEPSKEDDEHAEKFVDPGSRGSASEDPDDDPFPWAPHAPVQPEESVHLEDLPIISSFFKDQQSLQRFQKYFDIHKLEAMFQDMSSKLKSAQRESLPYNVEKVLDKVFRAWESHILTEAENMLDARVTENRDLETKDSSVFEEAAVLDDVQDLIYFVRYKHSTVEETAPPAAAQPVEGGWDGPAEDTQPPLEENFPQEHMEVPLMQIPKEPGHLAQPVTRDMGTSGVAQKPQTEEDGDPGIITPQGTPVDADDAQKQLAANTEEPASVTPLENAIAFIYSLVFHLTKTLLATLPDDVQPGPDFYGLPWKPVLITASLGIVSFAVFFWRTVLAVKSRVYQVTEQQISEKLKNIMKENAELVQKLSSYEQKIKESKKHVQETKKQNMILSDEAIKFKDKIKSLEETNEILGDTAKSLRAMLESEREQNAKNQDLISENKKSIEKLKDVISVNASEFSEVQIALNEAKLSEEKVKSECHRVQEENARLKKKKEQLQQEIKDWSKSHAELSEQIRSFEKSQKDLEVALTHKDDNINALTNCITQLNRLDCESESEDQNKGGSESDELANGEVGGDRSEKVKNQIKQMMDVSRTQTAISVVEEDLKLLQCKLRASMSTKCNLEDQIKKLEEDRSSLQSAKTVLEDECKTLRQKVEILNELYQQKEMALQKKLSQEEYERQEREQRLSAADEKAVLAAEEVKTYKRRIEEMEDELQKTERSFKNQIATHEKKAHDNWLKARAAERAIAEEKREAANLRHKLLELTQKMAMMQEEPVIVKPMPGRPNTQNPPRRGPLSQNGSFGPSPVSGGECSPPLTADPPARPLSATLNRREMPRSEFGSVDGPLPRPRWASEASGKPSASDPESGAAPTVNSSSRSSSPSKVMDEGKVSMAAKGPPPFPGTPLMSSPVGGPLLPPIRYGPPPQLCGPFGPRPLPPPFGPGMRPPLGLREYAPGVPPGKRDLPLDPREFLPPGHAPFRPLGSLGPREYFFPGTRLPPPNHGPQDYPPSSAARDLPPSGSRDEPPPASQGASQDCSPALKQSP.

Positions methionine 1–glycine 22 are cleaved as a signal peptide. At glutamine 23 to asparagine 1141 the chain is on the lumenal side. An SH3 domain is found at methionine 45–glutamate 107. A compositionally biased stretch (basic and acidic residues) spans serine 154–glutamate 167. Disordered regions lie at residues serine 154–glutamate 259 and threonine 313–arginine 621. A glycan (N-linked (GlcNAc...) asparagine) is linked at asparagine 173. Acidic residues predominate over residues asparagine 173 to glutamate 190. The segment covering alanine 198–lysine 208 has biased composition (basic and acidic residues). Residues serine 209–alanine 220 show a composition bias toward polar residues. Serine 226 and serine 229 each carry phosphoserine. The span at leucine 234–asparagine 245 shows a compositional bias: basic and acidic residues. An N-linked (GlcNAc...) asparagine glycan is attached at asparagine 246. Polar residues predominate over residues asparagine 246–serine 255. The segment covering glutamate 317–glutamate 327 has biased composition (acidic residues). 2 stretches are compositionally biased toward basic and acidic residues: residues glutamate 337–glutamate 366 and lysine 373–threonine 386. Residues methionine 392–leucine 414 are compositionally biased toward acidic residues. Basic and acidic residues-rich tracts occupy residues arginine 419–aspartate 436 and histidine 459–glycine 480. Positions valine 467–alanine 527 form a coiled coil. The segment covering aspartate 488 to leucine 500 has biased composition (polar residues). Basic and acidic residues predominate over residues isoleucine 531–serine 542. N-linked (GlcNAc...) asparagine glycosylation occurs at asparagine 627. Disordered stretches follow at residues glutamine 657 to proline 908, alanine 1036 to leucine 1059, and proline 1085 to aspartate 1118. A compositionally biased stretch (basic and acidic residues) spans valine 669–asparagine 714. Over residues proline 715–asparagine 730 the composition is skewed to acidic residues. Composition is skewed to basic and acidic residues over residues glutamine 736–valine 751, threonine 766–threonine 789, serine 842–proline 859, and proline 868–valine 884. Serine 873 carries the phosphoserine modification. An intramembrane segment occupies alanine 1142–proline 1162. Over aspartate 1163–glycine 1173 the chain is Lumenal. Residues leucine 1174–phenylalanine 1194 traverse the membrane as a helical segment. Residues tryptophan 1195–proline 1905 lie on the Cytoplasmic side of the membrane. Residues valine 1208–proline 1647 form a mediates interaction with MIA2 region. Positions glutamine 1211–threonine 1393 form a coiled coil. The tract at residues serine 1416 to lysine 1443 is disordered. The residue at position 1428 (serine 1428) is a Phosphoserine. Positions asparagine 1484–glutamate 1636 form a coiled coil. A disordered region spans residues isoleucine 1639–proline 1905. Over residues proline 1647 to phenylalanine 1664 the composition is skewed to polar residues. Phosphoserine is present on residues serine 1663, serine 1675, serine 1703, serine 1724, serine 1738, and serine 1742. The tract at residues aspartate 1748 to proline 1905 is proline-rich domain (PRD); mediates interaction with the COPII coat subunits SEC23A and SEC23B. The span at leucine 1776–arginine 1806 shows a compositional bias: pro residues. An Asymmetric dimethylarginine modification is found at arginine 1781. The segment at proline 1785–serine 1845 is SEC16A-interacting region (SIR); required for its localization to endoplasmic reticulum exit sites and for its interaction with SEC16A. A compositionally biased stretch (basic and acidic residues) spans glycine 1821–glutamate 1831. A phosphoserine mark is found at serine 1890 and serine 1904. Polar residues predominate over residues glutamine 1891 to proline 1905.

This sequence belongs to the MIA/OTOR family. Tango1 subfamily. Interacts with MIA2. Interacts (via SH3 domain) with COL7A1. Interacts with the COPII coat subunits SEC23A, SEC23B and maybe SEC24C. May interact with APOB and MIA2. Interacts with SEC16A.

The protein resides in the endoplasmic reticulum membrane. In terms of biological role, plays a role in the transport of cargos that are too large to fit into COPII-coated vesicles and require specific mechanisms to be incorporated into membrane-bound carriers and exported from the endoplasmic reticulum. This protein is required for collagen VII (COL7A1) secretion by loading COL7A1 into transport carriers. It may participate in cargo loading of COL7A1 at endoplasmic reticulum exit sites by binding to COPII coat subunits Sec23/24 and guiding SH3-bound COL7A1 into a growing carrier. Does not play a role in global protein secretion and is apparently specific to COL7A1 cargo loading. However, it may participate in secretion of other proteins in cells that do not secrete COL7A1. It is also specifically required for the secretion of lipoproteins by participating in their export from the endoplasmic reticulum. Required for correct assembly of COPII coat components at endoplasmic reticulum exit sites (ERES) and for the localization of SEC16A and membrane-bound ER-resident complexes consisting of MIA2 and PREB/SEC12 to ERES. The chain is Transport and Golgi organization protein 1 homolog from Bos taurus (Bovine).